The primary structure comprises 479 residues: MSFQAPRRLLELAGQSLLRDQALAISVLDELPRELFPPLFVEAFTSRRCEVLKVMVQAWPFPCLPLGSLMKTPDLEILHYVVDGIDCLLAQKVRPRRWKLQVLEMRDVDENFWTIWSGARLLSCSPEAMSKRQTVEDCPRTGEKQPLKVFMDVCLKEKFMDEDLSFFSGWVQHRRGSVHLCCTKVVNYSMSILNFRNILETVYPDSIQVLEIWNMCWLCMIVEFSRYLSQMRNLRKLFISDGCRYLLSSDSQEQLVAEFSSVLLRLENLQMLYVRRVCFFRGHLDQLIRCLRSPLETLALTYGFLEEEDLKCLPRYPSLSQLKQLNLSHGALRFIRLEPLRALLEKVAATLQTLFLVDCGIGYSKLRVILPALSRCSNLTTFCFHGNDTSMDALKDLLRHTGRLSNLSLETYPAPRESLDNRGRVILELLTPLQAELMRILREVREPKRIFFGPVSCPCCGTSPTEQLESNFCLWGRPA.

One copy of the LRR 1 repeat lies at 15 to 38 (QSLLRDQALAISVLDELPRELFPP). An LRR 1; degenerate repeat occupies 97 to 124 (RWKLQVLEMRDVDENFWTIWSGARLLSC). The stretch at 179 to 203 (HLCCTKVVNYSMSILNFRNILETVY) is one LRR 2; degenerate repeat. The stretch at 204–230 (PDSIQVLEIWNMCWLCMIVEFSRYLSQ) is one LRR 3; degenerate repeat. An LRR 4; degenerate repeat occupies 231 to 265 (MRNLRKLFISDGCRYLLSSDSQEQLVAEFSSVLLR). LRR repeat units follow at residues 266–291 (LENL…IRCL), 292–323 (RSPL…SQLK), 324–342 (QLNL…PLRA), 348–375 (AATL…ALSR), and 376–400 (CSNL…LLRH).

Belongs to the PRAME family.

The sequence is that of PRAME family member 18 from Homo sapiens (Human).